The following is a 175-amino-acid chain: B9 domain-containing protein 2 (175 aa).

Residues 2–118 (AEVHVIGQII…DCPTWRPLGS (117 aa)) enclose the C2 B9-type domain.

This sequence belongs to the B9D family. In terms of assembly, part of the tectonic-like complex (also named B9 complex). Interacts with TUBG1. In terms of tissue distribution, highest expression in thymus and skeletal muscle. Also expressed in spleen, kidney, lung, heart, microglia and liver. Detected in brain (at protein level).

It localises to the cytoplasm. Its subcellular location is the cytoskeleton. The protein localises to the cilium basal body. The protein resides in the cilium axoneme. It is found in the nucleus. In terms of biological role, component of the tectonic-like complex, a complex localized at the transition zone of primary cilia and acting as a barrier that prevents diffusion of transmembrane proteins between the cilia and plasma membranes. The polypeptide is B9 domain-containing protein 2 (B9d2) (Mus musculus (Mouse)).